We begin with the raw amino-acid sequence, 269 residues long: Undecaprenyl-diphosphatase (269 aa).

Helical transmembrane passes span 42 to 62 (WDTF…ALYF), 83 to 103 (LTVL…HGVI), 110 to 130 (PYLP…LLVV), 142 to 162 (GMAL…LSLL), 186 to 206 (AEFS…LDLL), 219 to 239 (AIAI…KFLI), and 247 to 267 (FTPF…LIYI).

The protein belongs to the UppP family.

The protein localises to the cell inner membrane. It catalyses the reaction di-trans,octa-cis-undecaprenyl diphosphate + H2O = di-trans,octa-cis-undecaprenyl phosphate + phosphate + H(+). In terms of biological role, catalyzes the dephosphorylation of undecaprenyl diphosphate (UPP). Confers resistance to bacitracin. The protein is Undecaprenyl-diphosphatase of Caulobacter sp. (strain K31).